A 185-amino-acid polypeptide reads, in one-letter code: Protein GrpE (185 aa).

It belongs to the GrpE family. In terms of assembly, homodimer.

Its subcellular location is the cytoplasm. Functionally, participates actively in the response to hyperosmotic and heat shock by preventing the aggregation of stress-denatured proteins, in association with DnaK and GrpE. It is the nucleotide exchange factor for DnaK and may function as a thermosensor. Unfolded proteins bind initially to DnaJ; upon interaction with the DnaJ-bound protein, DnaK hydrolyzes its bound ATP, resulting in the formation of a stable complex. GrpE releases ADP from DnaK; ATP binding to DnaK triggers the release of the substrate protein, thus completing the reaction cycle. Several rounds of ATP-dependent interactions between DnaJ, DnaK and GrpE are required for fully efficient folding. This chain is Protein GrpE, found in Methanobrevibacter smithii (strain ATCC 35061 / DSM 861 / OCM 144 / PS).